The primary structure comprises 341 residues: ATPase GET3 (341 aa).

34 to 41 (KGGVGKTT) serves as a coordination point for ATP. The active site involves Asp63. Residues Glu245 and Asn272 each contribute to the ATP site. Residues Cys283 and Cys286 each coordinate Zn(2+).

It belongs to the arsA ATPase family. As to quaternary structure, homodimer.

The protein localises to the cytoplasm. The protein resides in the endoplasmic reticulum. Functionally, ATPase required for the post-translational delivery of tail-anchored (TA) proteins to the endoplasmic reticulum. Recognizes and selectively binds the transmembrane domain of TA proteins in the cytosol. This complex then targets to the endoplasmic reticulum by membrane-bound receptors, where the tail-anchored protein is released for insertion. This process is regulated by ATP binding and hydrolysis. ATP binding drives the homodimer towards the closed dimer state, facilitating recognition of newly synthesized TA membrane proteins. ATP hydrolysis is required for insertion. Subsequently, the homodimer reverts towards the open dimer state, lowering its affinity for the membrane-bound receptor, and returning it to the cytosol to initiate a new round of targeting. In Ajellomyces capsulatus (strain H143) (Darling's disease fungus), this protein is ATPase GET3.